Consider the following 627-residue polypeptide: Zinc finger protein 256 (627 aa).

Positions 14–96 (VTFEDVAVYF…QKTNPCEICG (83 aa)) constitute a KRAB domain. The interval 55–76 (GSGAGDEEAPYQQSTSPQRVSQ) is disordered. Residues 65 to 75 (YQQSTSPQRVS) show a composition bias toward polar residues. 15 C2H2-type zinc fingers span residues 90 to 112 (NPCE…QGTH), 239 to 261 (YMCS…LRVH), 267 to 289 (YTCG…RRIH), 295 to 317 (HQCD…QRVH), 323 to 345 (YKCS…QRIH), 351 to 373 (YECS…QRVH), 379 to 401 (YMCS…RRLH), 407 to 429 (YECS…QRVH), 435 to 457 (HECH…ERVH), 463 to 485 (YECS…WKVH), 491 to 513 (YECG…QRVH), 519 to 541 (YECN…RRSH), 547 to 569 (YECS…RRVH), 575 to 597 (YECS…QRIH), and 603 to 625 (YECS…QNVH).

This sequence belongs to the krueppel C2H2-type zinc-finger protein family. As to quaternary structure, interacts with TRIM28.

The protein localises to the nucleus. Its function is as follows. Transcriptional repressor that plays a role in cell proliferation. Requires TRIM28 for its activity. The chain is Zinc finger protein 256 (ZNF256) from Homo sapiens (Human).